The primary structure comprises 217 residues: HTH-type transcriptional regulator EthR (217 aa).

A disordered region spans residues 1–22 (MTTASQTRTPRGRRSARPSGDD). The region spanning 21–81 (DDREAAILAT…SLIDPLIKRA (61 aa)) is the HTH tetR-type domain. A DNA-binding region (H-T-H motif) is located at residues 44–63 (SVDDLAKGAGISRPTFYFYF).

Homodimer.

Its function is as follows. Involved in the repression of teh monooxygenase EthA which is responsible of the formation of the active metabolite of ethionamide (ETH). This chain is HTH-type transcriptional regulator EthR (ethR), found in Mycolicibacterium smegmatis (strain ATCC 700084 / mc(2)155) (Mycobacterium smegmatis).